The following is a 212-amino-acid chain: Octanoyltransferase (212 aa).

The BPL/LPL catalytic domain maps to 31 to 209; that stretch reads AETQDEIWLV…HFADLLGYNI (179 aa). Residues 70 to 77, 138 to 140, and 151 to 153 each bind substrate; these read RGGQITYH, SLG, and GLA. The Acyl-thioester intermediate role is filled by Cys169.

It belongs to the LipB family.

It localises to the cytoplasm. It catalyses the reaction octanoyl-[ACP] + L-lysyl-[protein] = N(6)-octanoyl-L-lysyl-[protein] + holo-[ACP] + H(+). Its pathway is protein modification; protein lipoylation via endogenous pathway; protein N(6)-(lipoyl)lysine from octanoyl-[acyl-carrier-protein]: step 1/2. Functionally, catalyzes the transfer of endogenously produced octanoic acid from octanoyl-acyl-carrier-protein onto the lipoyl domains of lipoate-dependent enzymes. Lipoyl-ACP can also act as a substrate although octanoyl-ACP is likely to be the physiological substrate. The chain is Octanoyltransferase from Haemophilus influenzae (strain PittEE).